The sequence spans 400 residues: MAGATVTVEEVRKAQRATGPATVLAIGTATPANCVHQADYPDYYFRITKSEHMTDLKEKFKRMCDKSQIRKRYMHLTEEYLAENPNMCAYMAPSLDARQDIVVVEVPKLGKAAAQKAIKEWGQPKSKITHLVFCTTSGVDMPGADYQLTKMLGLRPSVNRLMMYQQGCFAGGTVLRVAKDLAENNRGARVLVVCSEITAVTFRGPSESHLDSMVGQALFGDGAAAVIVGADPDKRVECPLFQLVSASQTILPDSEGAIDGHLREVGLTFHLLKDVPGLISKNIERSLEEAFKPLGITDYNSIFWVAHPGGPAILDQVEAKVGLKKERMRATRHVLSEYGNMSSACVLFILDEMRKRSAEEGQATTGEGFDWGVLFGFGPGLTVETVVLHSVPITIAAITA.

Residue cysteine 168 is part of the active site.

It belongs to the thiolase-like superfamily. Chalcone/stilbene synthases family.

The catalysed reaction is (E)-4-coumaroyl-CoA + 3 malonyl-CoA + 3 H(+) = 2',4,4',6'-tetrahydroxychalcone + 3 CO2 + 4 CoA. Its pathway is secondary metabolite biosynthesis; flavonoid biosynthesis. The primary product of this enzyme is 4,2',4',6'-tetrahydroxychalcone (also termed naringenin-chalcone or chalcone) which can under specific conditions spontaneously isomerize into naringenin. This is Chalcone synthase 7 (CHS7) from Sorghum bicolor (Sorghum).